Reading from the N-terminus, the 179-residue chain is Large ribosomal subunit protein uL5 (179 aa).

Belongs to the universal ribosomal protein uL5 family. In terms of assembly, part of the 50S ribosomal subunit; part of the 5S rRNA/L5/L18/L25 subcomplex. Contacts the 5S rRNA and the P site tRNA. Forms a bridge to the 30S subunit in the 70S ribosome.

Functionally, this is one of the proteins that bind and probably mediate the attachment of the 5S RNA into the large ribosomal subunit, where it forms part of the central protuberance. In the 70S ribosome it contacts protein S13 of the 30S subunit (bridge B1b), connecting the 2 subunits; this bridge is implicated in subunit movement. Contacts the P site tRNA; the 5S rRNA and some of its associated proteins might help stabilize positioning of ribosome-bound tRNAs. The polypeptide is Large ribosomal subunit protein uL5 (Prochlorococcus marinus (strain MIT 9303)).